Reading from the N-terminus, the 467-residue chain is Siroheme synthase 2 (467 aa).

The segment at 1–204 (MDYLPIFCQL…NDVALAERQI (204 aa)) is precorrin-2 dehydrogenase /sirohydrochlorin ferrochelatase. NAD(+)-binding positions include 22–23 (EI) and 43–44 (CS). At serine 128 the chain carries Phosphoserine. The tract at residues 216 to 467 (GEVVLVGAGP…EPSQPLAQMA (252 aa)) is uroporphyrinogen-III C-methyltransferase. Proline 225 lines the S-adenosyl-L-methionine pocket. Aspartate 248 serves as the catalytic Proton acceptor. Lysine 270 functions as the Proton donor in the catalytic mechanism. Residues 301 to 303 (GGD), isoleucine 306, 331 to 332 (TA), methionine 382, and glycine 411 contribute to the S-adenosyl-L-methionine site.

This sequence in the N-terminal section; belongs to the precorrin-2 dehydrogenase / sirohydrochlorin ferrochelatase family. The protein in the C-terminal section; belongs to the precorrin methyltransferase family.

It carries out the reaction uroporphyrinogen III + 2 S-adenosyl-L-methionine = precorrin-2 + 2 S-adenosyl-L-homocysteine + H(+). The catalysed reaction is precorrin-2 + NAD(+) = sirohydrochlorin + NADH + 2 H(+). It catalyses the reaction siroheme + 2 H(+) = sirohydrochlorin + Fe(2+). It participates in cofactor biosynthesis; adenosylcobalamin biosynthesis; precorrin-2 from uroporphyrinogen III: step 1/1. It functions in the pathway cofactor biosynthesis; adenosylcobalamin biosynthesis; sirohydrochlorin from precorrin-2: step 1/1. The protein operates within porphyrin-containing compound metabolism; siroheme biosynthesis; precorrin-2 from uroporphyrinogen III: step 1/1. Its pathway is porphyrin-containing compound metabolism; siroheme biosynthesis; siroheme from sirohydrochlorin: step 1/1. It participates in porphyrin-containing compound metabolism; siroheme biosynthesis; sirohydrochlorin from precorrin-2: step 1/1. Functionally, multifunctional enzyme that catalyzes the SAM-dependent methylations of uroporphyrinogen III at position C-2 and C-7 to form precorrin-2 via precorrin-1. Then it catalyzes the NAD-dependent ring dehydrogenation of precorrin-2 to yield sirohydrochlorin. Finally, it catalyzes the ferrochelation of sirohydrochlorin to yield siroheme. The sequence is that of Siroheme synthase 2 from Serratia proteamaculans (strain 568).